We begin with the raw amino-acid sequence, 130 residues long: MREQLKLFTREIVDFTFLILSGFDYYQTLLISSNSSKKRPKDSSLLSEKKKKKKKKKKDVLSYLSYLKDLPFVPFLFWQPGYSQREKNPRQHSLFIMTITKPGMISMADMNYVVSKNRSLNRPAERGGNR.

The Cytoplasmic segment spans residues 1 to 58 (MREQLKLFTREIVDFTFLILSGFDYYQTLLISSNSSKKRPKDSSLLSEKKKKKKKKKK). The disordered stretch occupies residues 34–57 (NSSKKRPKDSSLLSEKKKKKKKKK). The chain crosses the membrane as a helical span at residues 59–79 (DVLSYLSYLKDLPFVPFLFWQ). Residues 80-94 (PGYSQREKNPRQHSL) lie on the Extracellular side of the membrane. The chain crosses the membrane as a helical span at residues 95–115 (FIMTITKPGMISMADMNYVVS). Residues 116-130 (KNRSLNRPAERGGNR) lie on the Cytoplasmic side of the membrane.

It is found in the membrane. This is an uncharacterized protein from Saccharomyces cerevisiae (strain ATCC 204508 / S288c) (Baker's yeast).